The following is an 87-amino-acid chain: uncharacterized protein (87 aa).

A run of 2 helical transmembrane segments spans residues Leu-25–Gly-45 and Tyr-53–Phe-73.

It is found in the cell membrane. This is an uncharacterized protein from Paracoccus denitrificans.